A 47-amino-acid chain; its full sequence is Large ribosomal subunit protein bL34 (47 aa).

Belongs to the bacterial ribosomal protein bL34 family.

The polypeptide is Large ribosomal subunit protein bL34 (Rhodococcus erythropolis (strain PR4 / NBRC 100887)).